We begin with the raw amino-acid sequence, 103 residues long: Large ribosomal subunit protein eL14 (103 aa).

Belongs to the eukaryotic ribosomal protein eL14 family.

In Ignicoccus hospitalis (strain KIN4/I / DSM 18386 / JCM 14125), this protein is Large ribosomal subunit protein eL14.